The following is a 380-amino-acid chain: Cytochrome b (380 aa).

A run of 4 helical transmembrane segments spans residues 34 to 54, 78 to 99, 114 to 134, and 179 to 199; these read FGSL…LLAM, WLIR…YFHI, WNTG…GYVL, and FFAL…IHLT. H84 and H98 together coordinate heme b. Heme b is bound by residues H183 and H197. H202 contacts a ubiquinone. Helical transmembrane passes span 227-247, 289-309, 321-341, and 348-368; these read LKDI…ALFS, LGGV…PFLH, ISQL…WVGS, and FIII…VLFP.

This sequence belongs to the cytochrome b family. As to quaternary structure, the cytochrome bc1 complex contains 11 subunits: 3 respiratory subunits (MT-CYB, CYC1 and UQCRFS1), 2 core proteins (UQCRC1 and UQCRC2) and 6 low-molecular weight proteins (UQCRH/QCR6, UQCRB/QCR7, UQCRQ/QCR8, UQCR10/QCR9, UQCR11/QCR10 and a cleavage product of UQCRFS1). This cytochrome bc1 complex then forms a dimer. Heme b is required as a cofactor.

It localises to the mitochondrion inner membrane. Its function is as follows. Component of the ubiquinol-cytochrome c reductase complex (complex III or cytochrome b-c1 complex) that is part of the mitochondrial respiratory chain. The b-c1 complex mediates electron transfer from ubiquinol to cytochrome c. Contributes to the generation of a proton gradient across the mitochondrial membrane that is then used for ATP synthesis. This is Cytochrome b (MT-CYB) from Pachyptila turtur (Fairy prion).